The following is a 680-amino-acid chain: Probable oxidoreductase YoaE (680 aa).

The 4Fe-4S Mo/W bis-MGD-type domain maps to N9 to K66. Residues C16, C20, C24, and C52 each coordinate [4Fe-4S] cluster.

The protein belongs to the prokaryotic molybdopterin-containing oxidoreductase family. Requires Mo-bis(molybdopterin guanine dinucleotide) as cofactor.

The polypeptide is Probable oxidoreductase YoaE (yoaE) (Bacillus subtilis (strain 168)).